The chain runs to 493 residues: UDP-N-acetylmuramoyl-L-alanyl-D-glutamate--2,6-diaminopimelate ligase (493 aa).

Threonine 32 contributes to the UDP-N-acetyl-alpha-D-muramoyl-L-alanyl-D-glutamate binding site. Position 110–116 (110–116 (GTNGKTT)) interacts with ATP. Residues asparagine 151, 152 to 153 (TT), serine 179, and arginine 187 each bind UDP-N-acetyl-alpha-D-muramoyl-L-alanyl-D-glutamate. Lysine 219 carries the N6-carboxylysine modification. Residues arginine 386, 410 to 413 (DNPR), glycine 460, and glutamate 464 each bind meso-2,6-diaminopimelate. The short motif at 410–413 (DNPR) is the Meso-diaminopimelate recognition motif element.

It belongs to the MurCDEF family. MurE subfamily. Mg(2+) serves as cofactor. Carboxylation is probably crucial for Mg(2+) binding and, consequently, for the gamma-phosphate positioning of ATP.

The protein resides in the cytoplasm. The catalysed reaction is UDP-N-acetyl-alpha-D-muramoyl-L-alanyl-D-glutamate + meso-2,6-diaminopimelate + ATP = UDP-N-acetyl-alpha-D-muramoyl-L-alanyl-gamma-D-glutamyl-meso-2,6-diaminopimelate + ADP + phosphate + H(+). Its pathway is cell wall biogenesis; peptidoglycan biosynthesis. Functionally, catalyzes the addition of meso-diaminopimelic acid to the nucleotide precursor UDP-N-acetylmuramoyl-L-alanyl-D-glutamate (UMAG) in the biosynthesis of bacterial cell-wall peptidoglycan. In Lactiplantibacillus plantarum (strain ATCC BAA-793 / NCIMB 8826 / WCFS1) (Lactobacillus plantarum), this protein is UDP-N-acetylmuramoyl-L-alanyl-D-glutamate--2,6-diaminopimelate ligase.